A 221-amino-acid polypeptide reads, in one-letter code: Small ribosomal subunit protein uS4c (221 aa).

Residues 26–53 are disordered; that stretch reads RKRTDNRCMPGQHRKKRNDSTKKTKNSK. Basic residues predominate over residues 37-53; sequence QHRKKRNDSTKKTKNSK. The S4 RNA-binding domain occupies 103-161; sequence MRLDNIVFRLGMAPTIPAARQLVNHGHIVVNNKKVDISSYQCQSQDVISVTKNKTIRTL.

Belongs to the universal ribosomal protein uS4 family. As to quaternary structure, part of the 30S ribosomal subunit. Contacts protein S5. The interaction surface between S4 and S5 is involved in control of translational fidelity.

The protein localises to the plastid. The protein resides in the chloroplast. Its function is as follows. One of the primary rRNA binding proteins, it binds directly to 16S rRNA where it nucleates assembly of the body of the 30S subunit. In terms of biological role, with S5 and S12 plays an important role in translational accuracy. The polypeptide is Small ribosomal subunit protein uS4c (rps4) (Pleurastrum terricola (Filamentous green alga)).